The following is a 246-amino-acid chain: E3 ubiquitin-protein ligase LubX (246 aa).

2 consecutive U-box domains span residues 36–109 and 131–204; these read TTPT…QTNY and EIPD…RKRE.

In terms of assembly, interacts with host CLK1. In terms of processing, ubiquitinated in the presence of host E1 ubiquitin-activating enzyme, E2 ubiquitin-conjugating enzyme (UBE2D1 or UBE2D3) and ubiquitin.

Its subcellular location is the secreted. It localises to the host cell. It carries out the reaction S-ubiquitinyl-[E2 ubiquitin-conjugating enzyme]-L-cysteine + [acceptor protein]-L-lysine = [E2 ubiquitin-conjugating enzyme]-L-cysteine + N(6)-ubiquitinyl-[acceptor protein]-L-lysine.. Functionally, effector proteins function to alter host cell physiology and promote bacterial survival in host tissues. This protein is an E3 ubiquitin ligase that interferes with host's ubiquitination pathway. Acts in conjunction with host E2 ubiquitin-conjugating enzymes UBE2D1 (UBCH5A) or UBE2D3 (UBCH5C), and mediates polyubiquitination of host kinase CLK1. This Legionella pneumophila subsp. pneumophila (strain Philadelphia 1 / ATCC 33152 / DSM 7513) protein is E3 ubiquitin-protein ligase LubX (lubX).